Reading from the N-terminus, the 309-residue chain is Zinc transporter ZIP2 (309 aa).

Topologically, residues 1 to 8 are extracellular; that stretch reads MEVLLGVK. A helical membrane pass occupies residues 9 to 29; the sequence is IGCLLALLVLTLGCGLTPIYV. Over 30-43 the chain is Cytoplasmic; it reads KWFQMDAATGHHHR. A helical membrane pass occupies residues 44 to 64; that stretch reads VLSLLGCTSAGVFLGAGLMHM. At 65–103 the chain is on the extracellular side; it reads TAEALEGIESEIQKFVEQNSTGSKGNSSRDAASSYVEYP. Residues 104 to 124 traverse the membrane as a helical segment; that stretch reads YGELVISLGFFFVFLLESLAL. Topologically, residues 125 to 164 are cytoplasmic; it reads QCCHGAAGGSTVQEEEWGGTHAFGFHKHPAVPSPSRGPLR. Residues 165–185 form a helical membrane-spanning segment; that stretch reads ALVLLLSLSFHSVFEGLAVGL. Zn(2+) is bound by residues His-175 and Glu-179. Over 186 to 191 the chain is Extracellular; that stretch reads QATVAA. Residues 192-212 traverse the membrane as a helical segment; the sequence is TIQLCVAVLAHKGLVVFSVGL. His-202 serves as a coordination point for Zn(2+). Residues 213–225 lie on the Cytoplasmic side of the membrane; that stretch reads RLGKIGTGPRWAT. A helical membrane pass occupies residues 226-246; that stretch reads FCILSLALMSPVGLALGLTVA. Residues 247–258 lie on the Extracellular side of the membrane; the sequence is GGASGQTQGLAQ. Residues 259-279 traverse the membrane as a helical segment; the sequence is AVLEGIAAGTFLYVTFLEILP. Glu-276 contributes to the Zn(2+) binding site. Residues 280 to 288 are Cytoplasmic-facing; sequence RELACPEAP. A helical transmembrane segment spans residues 289–309; it reads LAKYSCVAAGFAFMALIALWA.

It belongs to the ZIP transporter (TC 2.A.5) family. As to expression, high expression in the liver, skin and ovary.

The protein localises to the cell membrane. The enzyme catalyses Zn(2+)(in) = Zn(2+)(out). The catalysed reaction is Cd(2+)(in) = Cd(2+)(out). In terms of biological role, transporter for the divalent cation Zn(2+). Mediates the influx of Zn(2+) into cells from extracellular space. The Zn(2+) uniporter activity is independent of H(+)-driving force, but is modulated by extracellular pH and membrane potential. Transports also other divalent cations Zn(2+), Cd2(+), Cu2(+), Co2(+) in the order of decreasing affinity, respectively. In the skin, aids in the differentiation of keratinocytes in the epidermis. This is Zinc transporter ZIP2 (Slc39a2) from Mus musculus (Mouse).